The sequence spans 238 residues: Small ribosomal subunit protein uS2 (238 aa).

The protein belongs to the universal ribosomal protein uS2 family.

The protein is Small ribosomal subunit protein uS2 of Moorella thermoacetica (strain ATCC 39073 / JCM 9320).